The following is a 91-amino-acid chain: Protein YchS (91 aa).

This Escherichia coli O157:H7 protein is Protein YchS (ychS).